The sequence spans 232 residues: Large ribosomal subunit protein uL1 (232 aa).

This sequence belongs to the universal ribosomal protein uL1 family. In terms of assembly, part of the 50S ribosomal subunit.

In terms of biological role, binds directly to 23S rRNA. The L1 stalk is quite mobile in the ribosome, and is involved in E site tRNA release. Protein L1 is also a translational repressor protein, it controls the translation of the L11 operon by binding to its mRNA. In Bacillus licheniformis (strain ATCC 14580 / DSM 13 / JCM 2505 / CCUG 7422 / NBRC 12200 / NCIMB 9375 / NCTC 10341 / NRRL NRS-1264 / Gibson 46), this protein is Large ribosomal subunit protein uL1.